The chain runs to 178 residues: Large ribosomal subunit protein bL25 (178 aa).

Belongs to the bacterial ribosomal protein bL25 family. CTC subfamily. In terms of assembly, part of the 50S ribosomal subunit; part of the 5S rRNA/L5/L18/L25 subcomplex. Contacts the 5S rRNA. Binds to the 5S rRNA independently of L5 and L18.

In terms of biological role, this is one of the proteins that binds to the 5S RNA in the ribosome where it forms part of the central protuberance. The sequence is that of Large ribosomal subunit protein bL25 from Helicobacter pylori (strain J99 / ATCC 700824) (Campylobacter pylori J99).